Here is a 170-residue protein sequence, read N- to C-terminus: UPF0161 protein At3g09310 (170 aa).

2 disordered regions span residues 49 to 70 (CLSA…GEEL) and 147 to 170 (SGIK…QRKI). The span at 154-170 (GDEEEEDNYDDEDQRKI) shows a compositional bias: acidic residues.

Belongs to the UPF0161 family.

This Arabidopsis thaliana (Mouse-ear cress) protein is UPF0161 protein At3g09310.